We begin with the raw amino-acid sequence, 285 residues long: Isoprenyl transferase 2 (285 aa).

Positions 11–30 (RREYRAPEPHPSGARAPKLP) are disordered. Aspartate 43 is a catalytic residue. Residue aspartate 43 participates in Mg(2+) binding. Substrate-binding positions include 44–47 (GNGR), tryptophan 48, arginine 56, histidine 60, and 88–90 (STE). Asparagine 91 (proton acceptor) is an active-site residue. Substrate-binding positions include tryptophan 92, arginine 94, arginine 211, and 217–219 (RTS). Glutamate 230 lines the Mg(2+) pocket.

This sequence belongs to the UPP synthase family. Homodimer. The cofactor is Mg(2+).

Functionally, catalyzes the condensation of isopentenyl diphosphate (IPP) with allylic pyrophosphates generating different type of terpenoids. The protein is Isoprenyl transferase 2 of Streptomyces avermitilis (strain ATCC 31267 / DSM 46492 / JCM 5070 / NBRC 14893 / NCIMB 12804 / NRRL 8165 / MA-4680).